The chain runs to 323 residues: Flavone synthase cfoJ (323 aa).

The cofactor is FMN.

It participates in secondary metabolite biosynthesis; flavonoid biosynthesis. In terms of biological role, FMN-dependent oxidoreductase; part of the gene cluster that mediates the biosynthesis of chlorflavonin, a fungal flavonoid with acetolactate synthase inhibitory activity. Within the pathway, cfoJ acts as a flavone synthase (FNS) and catalyzes the formation of a double bond between C2 and C3, converting the flavanone into a flavone. The pathway begins with the PKS-NRPS hybrid synthetase cfoA that uses benzoic acid or p-hydroxybenzoic acid as a starter unit with four rounds of chain elongation using malonyl-CoA to form the chalcone skeleton. Then, a new type of chalcone isomerase, cfoK, catalyzes the conversion of the chalcone into a flavanone by a histidine-mediated oxa-Michael addition mechanism. The desaturation of flavanone to flavone is catalyzed by a new type of flavone synthase, the flavin mononucleotide (FMN)-dependent oxidoreductase cfoJ. Monooxygenases cfoF, cfoG, and P450 cfoH are responsible for the hydroxylation of the flavonoid skeleton at sites C3, C8, and C2', respectively. Like cfoF, the dehydratase cfoI plays also a role in the hydroxylation of position C3. Methyltransferases cfoB, cfoC, and cfoD then catalyze the methylation of C7-OH, C8-OH, and C3-OH, respectively. Finally, the monooxygenase cfoE is responsible for the chlorination of flavonoid at position C3'. This is Flavone synthase cfoJ from Aspergillus candidus.